The following is a 350-amino-acid chain: tRNA uridine(34) hydroxylase (350 aa).

Residues 128-221 (EETDYVMIDT…YMKEYPNDQF (94 aa)) form the Rhodanese domain. Cysteine 181 serves as the catalytic Cysteine persulfide intermediate.

Belongs to the TrhO family.

It catalyses the reaction uridine(34) in tRNA + AH2 + O2 = 5-hydroxyuridine(34) in tRNA + A + H2O. Its function is as follows. Catalyzes oxygen-dependent 5-hydroxyuridine (ho5U) modification at position 34 in tRNAs. The chain is tRNA uridine(34) hydroxylase from Bdellovibrio bacteriovorus (strain ATCC 15356 / DSM 50701 / NCIMB 9529 / HD100).